The following is a 223-amino-acid chain: MNIIIFSLMTISFLRARFGYEKEILPMMDTASDKSYLQGPPNPYTATVNPLERLISDTYLKVTGILSHYFAYYQENVAEFRRWFQSIYYEMDDDTRKKILNELNLNLRSMDDLENFWTETQGAILKGNLLELSDLLKGLEEAVNAKTHMSSEANNDLIKSKINFKDKAVDFLNQLNKIYGFLDLGLSYHTSNRFTDVHAMFLDAAASKKKLDKSFESISGIDD.

Positions 1–16 (MNIIIFSLMTISFLRA) are cleaved as a signal peptide. The short motif at 207–214 (SKKKLDKS) is the HBM element.

The protein localises to the spore core. The protein resides in the spore wall. It localises to the spore. It is found in the perispore. Its function is as follows. Spore wall protein involved in the adhesion to host cells surface. Microsporidian spore adherence is an integral part of activation and host cell invasion which requires the extrusion at the spore apex of a very long and coiled structure, the polar tube, through which the sporoplasm is pushed to enter into the potential host cell. The protein is Spore wall protein 26 (SWP26) of Nosema bombycis (strain CQ1 / CVCC 102059) (Microsporidian parasite).